The primary structure comprises 230 residues: Androgen-dependent TFPI-regulating protein (230 aa).

Residues 1–3 (MTK) are Cytoplasmic-facing. A helical membrane pass occupies residues 4 to 24 (TSTCIYHFLVLSWYTFLNYYI). The Extracellular segment spans residues 25 to 46 (SQEGKDEVKPKILANGARWKYM). The chain crosses the membrane as a helical span at residues 47 to 67 (TLLNLLLQTIFYGVTCLDDVL). Over 68 to 85 (KRTKGGKDIKFLTAFRDL) the chain is Cytoplasmic. Residues 86-106 (LFTTLAFPVSTFVFLAFWILF) traverse the membrane as a helical segment. The Extracellular portion of the chain corresponds to 107–119 (LYNRDLIYPKVLD). Residues 120–140 (TVIPVWLNHAMHTFIFPITLA) traverse the membrane as a helical segment. The Cytoplasmic portion of the chain corresponds to 141–154 (EVVLRPHSYPSKKT). The chain crosses the membrane as a helical span at residues 155 to 175 (GLTLLAAASIAYISRILWLYF). The Extracellular portion of the chain corresponds to 176-189 (ETGTWVYPVFAKLS). Residues 190-210 (LLGLAAFFSLSYVFIASIYLL) traverse the membrane as a helical segment. Residues 211–230 (GEKLNHWKWGDMRQPRKKRK) lie on the Cytoplasmic side of the membrane.

This sequence belongs to the AIG1 family. In terms of tissue distribution, expressed in cultured endothelial cells and in placenta.

Its subcellular location is the cell membrane. It carries out the reaction 9-hexadecanoyloxy-octadecanoate + H2O = 9-hydroxy-octadecanoate + hexadecanoate + H(+). It catalyses the reaction 12-hexadecanoyloxy-octadecanoate + H2O = 12-hydroxyoctadecanoate + hexadecanoate + H(+). The catalysed reaction is 9-(9Z-hexadecenoyloxy)-octadecanoate + H2O = (9Z)-hexadecenoate + 9-hydroxy-octadecanoate + H(+). The enzyme catalyses 12-(9Z-hexadecenoyloxy)-octadecanoate + H2O = 12-hydroxyoctadecanoate + (9Z)-hexadecenoate + H(+). It carries out the reaction 13-(9Z-hexadecenoyloxy)-octadecanoate + H2O = 13-hydroxy-octadecanoate + (9Z)-hexadecenoate + H(+). It catalyses the reaction 9-octadecanoyloxy-octadecanoate + H2O = 9-hydroxy-octadecanoate + octadecanoate + H(+). The catalysed reaction is 12-octadecanoyloxy-octadecanoate + H2O = 12-hydroxyoctadecanoate + octadecanoate + H(+). The enzyme catalyses 13-octadecanoyloxy-octadecanoate + H2O = 13-hydroxy-octadecanoate + octadecanoate + H(+). It carries out the reaction 9-(9Z-octadecenoyloxy)-octadecanoate + H2O = 9-hydroxy-octadecanoate + (9Z)-octadecenoate + H(+). It catalyses the reaction 12-(9Z-octadecenoyloxy)-octadecanoate + H2O = 12-hydroxyoctadecanoate + (9Z)-octadecenoate + H(+). The catalysed reaction is 13-(9Z-octadecenoyloxy)-octadecanoate + H2O = 13-hydroxy-octadecanoate + (9Z)-octadecenoate + H(+). The enzyme catalyses 5-(9Z-octadecenoyloxy)-octadecanoate + H2O = 5-hydroxy-octadecanoate + (9Z)-octadecenoate + H(+). Its activity is regulated as follows. Inhibited by N-hydroxyhydantoin carbamate JJH260 and beta-lactone KC01. Functionally, hydrolyzes bioactive fatty-acid esters of hydroxy-fatty acids (FAHFAs), but not other major classes of lipids. Show a preference for FAHFAs with branching distal from the carboxylate head group of the lipids. Regulates the expression and the cell-associated anticoagulant activity of the inhibitor TFPI in endothelial cells (in vitro). The protein is Androgen-dependent TFPI-regulating protein (ADTRP) of Homo sapiens (Human).